A 20-amino-acid polypeptide reads, in one-letter code: Antifungal protein J (20 aa).

The protein resides in the vacuole. In terms of biological role, inhibitor of serine proteases chymotrypsin, pepsin and trypsin. Has strong antifungal activity against the human pathogenic fungi C.albicans TIMM 1768, S.cerevisiae KCTC 7296 and T.beigelli KCTC 7707, but lacks antifungal activity against the plant pathogenic fungi C.gloeosporioides KACC 40003, C.coccodes KACC 40803 and D.bryoniae KACC 40669. Lacks hemolytic activity against human erythrocytes. The protein is Antifungal protein J of Solanum tuberosum (Potato).